The sequence spans 338 residues: Cytoskeleton protein RodZ (338 aa).

Topologically, residues 1-111 are cytoplasmic; that stretch reads MNTEASQDQT…LGKKHKKRDG (111 aa). An HTH cro/C1-type domain is found at 19 to 79; it reads LRQAREALGL…KLVHLPEDEL (61 aa). Positions 30–49 form a DNA-binding region, H-T-H motif; that stretch reads QQMVAERLCLKVSTIRDIEE. Residues 112–132 form a helical; Signal-anchor for type II membrane protein membrane-spanning segment; sequence WLMSFTWLIVLVVLGLTGAWW. The Periplasmic portion of the chain corresponds to 133–338; that stretch reads WQNHQAQQAE…RVARLTVGVE (206 aa). Composition is skewed to polar residues over residues 151 to 163 and 180 to 195; these read SAQL…QSVP and PVAN…NGTV. Residues 151 to 253 are disordered; the sequence is SAQLSQNGGQ…LPTADAGVTG (103 aa). A compositionally biased stretch (low complexity) spans 196–209; the sequence is PATSSAAPADTANN. Residues 210–241 are compositionally biased toward polar residues; the sequence is GVNTTAPQGTTSAESAVVSPSQAPLPSVSTAQ.

This sequence belongs to the RodZ family.

Its subcellular location is the cell inner membrane. In terms of biological role, cytoskeletal protein that is involved in cell-shape control through regulation of the length of the long axis. This Yersinia enterocolitica serotype O:8 / biotype 1B (strain NCTC 13174 / 8081) protein is Cytoskeleton protein RodZ.